The sequence spans 789 residues: Cadherin-10 (789 aa).

An N-terminal signal peptide occupies residues 1 to 22; it reads MTIQQVLLLLLLWMWLLHPCRT. The propeptide occupies 23–54; it reads EMLFRRTPDLRPKGFVGRTSGSDGKALHRQKR. 5 Cadherin domains span residues 55-160, 161-269, 270-384, 385-487, and 488-606; these read GWMW…EPTF, PEEI…PPRF, PQST…PPVF, SRSS…DNAP, and QFAV…LLLP. At 55-606 the chain is on the extracellular side; the sequence is GWMWNQFFLL…SCNAEALLLP (552 aa). Asparagine 256 carries an N-linked (GlcNAc...) asparagine glycan. N-linked (GlcNAc...) asparagine glycosylation is found at asparagine 438, asparagine 456, and asparagine 534. A helical membrane pass occupies residues 607–634; it reads AGLSTGALIAILLCIIILLVIVVLFAAL. Over 635 to 789 the chain is Cytoplasmic; that stretch reads KRQRKKEPLI…GGGESDKDAS (155 aa).

It is found in the cell membrane. Cadherins are calcium-dependent cell adhesion proteins. They preferentially interact with themselves in a homophilic manner in connecting cells; cadherins may thus contribute to the sorting of heterogeneous cell types. The protein is Cadherin-10 (CDH10) of Gallus gallus (Chicken).